The primary structure comprises 302 residues: Oxygen-dependent coproporphyrinogen-III oxidase (302 aa).

Residue Ser-94 coordinates substrate. Residues His-98 and His-108 each contribute to the a divalent metal cation site. The active-site Proton donor is His-108. 110–112 (NVR) lines the substrate pocket. The a divalent metal cation site is built by His-147 and His-177. Residues 242–277 (YVEFNLVYDRGTLFGLQTGGRTESILMSMPPLVRWQ) form an important for dimerization region. A substrate-binding site is contributed by 260–262 (GGR).

The protein belongs to the aerobic coproporphyrinogen-III oxidase family. Homodimer. It depends on a divalent metal cation as a cofactor.

It localises to the cytoplasm. The catalysed reaction is coproporphyrinogen III + O2 + 2 H(+) = protoporphyrinogen IX + 2 CO2 + 2 H2O. Its pathway is porphyrin-containing compound metabolism; protoporphyrin-IX biosynthesis; protoporphyrinogen-IX from coproporphyrinogen-III (O2 route): step 1/1. Involved in the heme biosynthesis. Catalyzes the aerobic oxidative decarboxylation of propionate groups of rings A and B of coproporphyrinogen-III to yield the vinyl groups in protoporphyrinogen-IX. The polypeptide is Oxygen-dependent coproporphyrinogen-III oxidase (Shewanella putrefaciens (strain CN-32 / ATCC BAA-453)).